Reading from the N-terminus, the 271-residue chain is N-acetyltransferase ECO1 (271 aa).

The interval 1–38 (MKTYRAKRKYLSESEDDVFSSSPTQSPETSPLQPPNES) is disordered. Residues 20-31 (SSSPTQSPETSP) show a composition bias toward low complexity. The CCHH-type zinc-finger motif lies at 80–104 (TTCKTCGMTYQVAYGPDISAHKSFH).

The protein belongs to the acetyltransferase family. ECO subfamily.

The protein resides in the nucleus. Functionally, probable acetyltransferase required for the establishment of sister chromatid cohesion and couple the processes of cohesion and DNA replication to ensure that only sister chromatids become paired together. In contrast to the structural cohesins, the deposition and establishment factors are required only during S phase. Acts by acetylating the cohesin complex component SMC3. The chain is N-acetyltransferase ECO1 (ECO1) from Yarrowia lipolytica (strain CLIB 122 / E 150) (Yeast).